The primary structure comprises 324 residues: Esterase FPSE_08126 (324 aa).

Residues Ser156, Asp255, and His285 contribute to the active site.

This sequence belongs to the AB hydrolase 3 family.

Esterase; part of the Fusarium detoxification of benzoxazolinone cluster involved in the degradation of benzoxazolinones produced by the host plant. Maize, wheat, and rye produce the 2 benzoxazinone phytoanticipins 2,4-dihy-droxy-7-methoxy-1,4-benzoxazin-3-one (DIMBOA) and 2,4-dihydroxy-1,4-benzoxazin-3-one (DIBOA) that, due to their inherent instability once released, spontaneously degrade to the more stable corresponding benzoxazolinones, 6-methoxy-2-benzoxazolinone (MBOA) and 2-benzoxazolinone (BOA), respectively. The first step in the detoxification of benzoxazolinones involves the hydrolysis of the cyclic ester bond of benzoxazolinones by the gamma-lactamase FDB1 to aminophenols. FDB1 is able to convert 2-benzoxazolinone (BOA) into 2-aminophenol (2-AP), as well as 6-methoxy-2-benzoxazolinone (MBOA) into 5-methoxy-2-aminophenol (2-AMP). The N-malonyltransferase FDB2 then metabolizes aminophenols via N-malonylation to non-toxic malonamic acids. FDB2 converts 2-AP into N-(2-hydroxyphenyl) malonamic acid (HPMA) and 2-AMP into N-(2-hydroxy-4-methoxyphenyl) malonamic acid (HMPMA). The cluster also contains 2 transcription factors (FDB3 and FPSE_08121), an aldo-keto reductase (FPSE_08125) that possibly associates with a ketone component of BOA and MBOA degradation, an esterase (FPSE_08126), an acyl-CoA transferase (FPSE_08120), a solute carrier protein (FPSE_08119) and a transmembrane transporter (FPSE_08127) proposed to shuttle metabolites of benzoxazolinone degradation. The chain is Esterase FPSE_08126 from Fusarium pseudograminearum (strain CS3096) (Wheat and barley crown-rot fungus).